The chain runs to 660 residues: Arginine--tRNA ligase, cytoplasmic (660 aa).

N-acetylmethionine is present on M1. A could be involved in the assembly of the multisynthetase complex region spans residues 1 to 72 (MDVLVSECSA…QAERNKPTKN (72 aa)). Residues 200–202 (SPN), H211, Y384, D388, and Q412 each bind L-arginine. The 'HIGH' region motif lies at 201–212 (PNIAKEMHVGHL). The interval 529–543 (NTAAYLLYAFTRIRS) is interaction with tRNA.

This sequence belongs to the class-I aminoacyl-tRNA synthetase family. In terms of assembly, interacts (via N-terminus) with AIMP1 (via N-terminus); this stimulates its catalytic activity. Interacts (via N-terminus) with LARS2 (via C-terminus). Monomer. Part of a multisubunit complex that groups tRNA ligases for Arg (RARS1), Asp (DARS1), Gln (QARS1), Ile (IARS1), Leu (LARS1), Lys (KARS1), Met (MARS1) the bifunctional ligase for Glu and Pro (EPRS1) and the auxiliary subunits AIMP1/p43, AIMP2/p38 and EEF1E1/p18. Interacts with QARS1. Part of a complex composed of RARS1, QARS1 and AIMP1.

It localises to the cytoplasm. The protein localises to the cytosol. It carries out the reaction tRNA(Arg) + L-arginine + ATP = L-arginyl-tRNA(Arg) + AMP + diphosphate. Its function is as follows. Forms part of a macromolecular complex that catalyzes the attachment of specific amino acids to cognate tRNAs during protein synthesis. Modulates the secretion of AIMP1 and may be involved in generation of the inflammatory cytokine EMAP2 from AIMP1. The protein is Arginine--tRNA ligase, cytoplasmic of Homo sapiens (Human).